We begin with the raw amino-acid sequence, 31 residues long: Cliotide T11 (31 aa).

A cross-link (cyclopeptide (Gly-Asn)) is located at residues 1–31; that stretch reads GIPCGESCVFIPCTITALLGCSCKDKVCYKN. 3 disulfide bridges follow: Cys4/Cys21, Cys8/Cys23, and Cys13/Cys28.

In terms of processing, contains 3 disulfide bonds. This is a cyclic peptide. In terms of tissue distribution, expressed in seed but not in root, nodule, flower, stem, shoot, leaf and pod (at protein level).

Functionally, probably participates in a plant defense mechanism. The sequence is that of Cliotide T11 from Clitoria ternatea (Butterfly pea).